Reading from the N-terminus, the 449-residue chain is Heterogeneous nuclear ribonucleoprotein H (449 aa).

Position 1 is an N-acetylmethionine (M1). N-acetylmethionine; in Heterogeneous nuclear ribonucleoprotein H, N-terminally processed is present on M2. The RRM 1 domain maps to 11 to 90 (FVVKVRGLPW…RYVEVFKSNN (80 aa)). At S23 the chain carries Phosphoserine. A Glycyl lysine isopeptide (Lys-Gly) (interchain with G-Cter in SUMO2) cross-link involves residue K35. Phosphoserine is present on residues S54 and S63. Glycyl lysine isopeptide (Lys-Gly) (interchain with G-Cter in SUMO2) cross-links involve residues K87 and K98. Positions 111 to 188 (GFVRLRGLPF…RYIEIFKSSR (78 aa)) constitute an RRM 2 domain. Dimethylated arginine; alternate is present on R233. The residue at position 233 (R233) is an Omega-N-methylarginine; alternate. One copy of the 1-1 repeat lies at 234-249 (GAYGGGYGGYDDYNGY). Residues 234-433 (GAYGGGYGGY…YGGQSSMSGY (200 aa)) form a 2 X 16 AA Gly-rich approximate repeats region. Y246 is subject to Phosphotyrosine. The region spanning 289 to 364 (HCVHMRGLPY…RYVELFLNST (76 aa)) is the RRM 3 domain. S310 carries the phosphoserine modification. 3 tandem repeats follow at residues 354 to 372 (HRYV…GGAY), 374 to 392 (HRYV…GGAY), and 418 to 433 (GGYG…MSGY). Positions 354–392 (HRYVELFLNSTAGASGGAYEHRYVELFLNSTAGASGGAY) are 2 X 19 AA perfect repeats.

In terms of assembly, part of a ternary complex containing FUBP2, PTBP1, PTBP2 and HNRNPH1. Identified in the spliceosome C complex. Interacts with IGF2BP1. Interacts with CUGBP1; the interaction is RNA-dependent. Interacts with MBNL1; the interaction in RNA-independent.

The protein localises to the nucleus. It localises to the nucleoplasm. Its function is as follows. This protein is a component of the heterogeneous nuclear ribonucleoprotein (hnRNP) complexes which provide the substrate for the processing events that pre-mRNAs undergo before becoming functional, translatable mRNAs in the cytoplasm. Mediates pre-mRNA alternative splicing regulation. Inhibits, together with CUGBP1, insulin receptor (IR) pre-mRNA exon 11 inclusion in myoblast. Binds to the IR RNA. Binds poly(RG). This chain is Heterogeneous nuclear ribonucleoprotein H (Hnrnph1), found in Mus musculus (Mouse).